A 380-amino-acid polypeptide reads, in one-letter code: Putative RNA ligase (380 aa).

Functionally, putative RNA ligase. Is able to catalyze the adenylation reaction of ssDNA 3'-terminal phosphate (ssDNA 3'p) to 3'-adenylated DNA (ssDNA 3'pp5'A). This is Putative RNA ligase from Thermovibrio ammonificans (strain DSM 15698 / JCM 12110 / HB-1).